Here is a 298-residue protein sequence, read N- to C-terminus: Lipoyl synthase (298 aa).

Cys-40, Cys-45, Cys-51, Cys-67, Cys-71, Cys-74, and Ser-280 together coordinate [4Fe-4S] cluster. The 217-residue stretch at 53–269 (AVRKTATFMI…KEIALSKGFS (217 aa)) folds into the Radical SAM core domain.

It belongs to the radical SAM superfamily. Lipoyl synthase family. [4Fe-4S] cluster serves as cofactor.

The protein localises to the cytoplasm. The catalysed reaction is [[Fe-S] cluster scaffold protein carrying a second [4Fe-4S](2+) cluster] + N(6)-octanoyl-L-lysyl-[protein] + 2 oxidized [2Fe-2S]-[ferredoxin] + 2 S-adenosyl-L-methionine + 4 H(+) = [[Fe-S] cluster scaffold protein] + N(6)-[(R)-dihydrolipoyl]-L-lysyl-[protein] + 4 Fe(3+) + 2 hydrogen sulfide + 2 5'-deoxyadenosine + 2 L-methionine + 2 reduced [2Fe-2S]-[ferredoxin]. Its pathway is protein modification; protein lipoylation via endogenous pathway; protein N(6)-(lipoyl)lysine from octanoyl-[acyl-carrier-protein]. Its function is as follows. Catalyzes the radical-mediated insertion of two sulfur atoms into the C-6 and C-8 positions of the octanoyl moiety bound to the lipoyl domains of lipoate-dependent enzymes, thereby converting the octanoylated domains into lipoylated derivatives. The chain is Lipoyl synthase from Bacillus thuringiensis (strain Al Hakam).